The chain runs to 547 residues: Cilia- and flagella- associated protein 210 (547 aa).

Positions 184-254 (KLNVEKAFKE…EIEMKKKQGK (71 aa)) form a coiled coil. Positions 210–237 (KDHLKQIKEHEEEEERRRKEEEKDAEEI) are disordered.

In terms of assembly, microtubule inner protein component of sperm flagellar doublet microtubules. As to expression, expressed in trachea multiciliated cells.

The protein resides in the cytoplasm. Its subcellular location is the cytoskeleton. It localises to the cilium axoneme. It is found in the flagellum axoneme. Functionally, microtubule inner protein (MIP) part of the dynein-decorated doublet microtubules (DMTs) in cilia axoneme, which is required for motile cilia beating. This is Cilia- and flagella- associated protein 210 (CFAP210) from Bos taurus (Bovine).